The following is a 316-amino-acid chain: DNA-directed RNA polymerase III subunit RPC6 (316 aa).

The residue at position 2 (alanine 2) is an N-acetylalanine. Residues lysine 5 and lysine 7 each participate in a glycyl lysine isopeptide (Lys-Gly) (interchain with G-Cter in SUMO2) cross-link. Residues cysteine 287, cysteine 290, cysteine 296, and cysteine 307 each contribute to the [4Fe-4S] cluster site.

The protein belongs to the eukaryotic RPC34/RPC39 RNA polymerase subunit family. Component of the RNA polymerase III complex consisting of 17 subunits: a ten-subunit horseshoe-shaped catalytic core composed of POLR3A/RPC1, POLR3B/RPC2, POLR1C/RPAC1, POLR1D/RPAC2, POLR3K/RPC10, POLR2E/RPABC1, POLR2F/RPABC2, POLR2H/RPABC3, POLR2K/RPABC4 and POLR2L/RPABC5; a mobile stalk composed of two subunits POLR3H/RPC8 and CRCP/RPC9, protruding from the core and functioning primarily in transcription initiation; and additional subunits homologous to general transcription factors of the RNA polymerase II machinery, POLR3C/RPC3-POLR3F/RPC6-POLR3G/RPC7 heterotrimer required for transcription initiation and POLR3D/RPC4-POLR3E/RPC5 heterodimer involved in both transcription initiation and termination. Directly interacts with POLR3C. Interacts with TBP and TFIIIB90 and GTF3C4. Interacts with MAF1. As part of the RNA polymerase III complex, interacts with PKP2.

Its subcellular location is the nucleus. DNA-dependent RNA polymerase catalyzes the transcription of DNA into RNA using the four ribonucleoside triphosphates as substrates. Specific peripheric component of RNA polymerase III (Pol III) which synthesizes small non-coding RNAs including 5S rRNA, snRNAs, tRNAs and miRNAs from at least 500 distinct genomic loci. Part of POLR3C/RPC3-POLR3F/RPC6-POLR3G/RPC7 heterotrimer that coordinates the dynamics of Pol III stalk and clamp modules during the transition from apo to elongation state. Pol III plays a key role in sensing and limiting infection by intracellular bacteria and DNA viruses, including varicella zoster virus. Acts as a nuclear and cytosolic DNA sensor detecting AT-rich DNA, involved in innate immune response. Can sense non-self dsDNA that serves as template for transcription into dsRNA. The non-self RNA polymerase III transcripts, such as Epstein-Barr virus-encoded RNAs (EBERs) induce type I interferon and NF-kappa-B through the RIG-I pathway. Preferentially binds double-stranded DNA (dsDNA). This Mus musculus (Mouse) protein is DNA-directed RNA polymerase III subunit RPC6.